The following is a 239-amino-acid chain: Zwei Ig domain protein zig-7 (239 aa).

An N-terminal signal peptide occupies residues 1-21; that stretch reads MKLINCISIALLCTLVDFSSA. Asn-43 is a glycosylation site (N-linked (GlcNAc...) asparagine). Residues 145–211 enclose the Ig-like C2-type domain; the sequence is PHVIGAERRG…TEDHIGKYRC (67 aa). Cys-164 and Cys-211 are joined by a disulfide.

Expressed in body wall muscles.

Its subcellular location is the secreted. Probably not involved in maintaining the position of ASI and ASH head neuron cell bodies and ventral nerve cord axons of PVQ, PVP, RMEV, AVK and HSN neurons. This is Zwei Ig domain protein zig-7 from Caenorhabditis elegans.